A 49-amino-acid polypeptide reads, in one-letter code: Large ribosomal subunit protein bL33A (49 aa).

It belongs to the bacterial ribosomal protein bL33 family.

The sequence is that of Large ribosomal subunit protein bL33A from Bacillus cytotoxicus (strain DSM 22905 / CIP 110041 / 391-98 / NVH 391-98).